The primary structure comprises 595 residues: Aspartate--tRNA ligase (595 aa).

L-aspartate is bound at residue Glu173. The aspartate stretch occupies residues 197–200 (QLFK). Arg219 is a binding site for L-aspartate. ATP is bound by residues 219 to 221 (RDE) and Gln228. His449 is a binding site for L-aspartate. Glu483 lines the ATP pocket. L-aspartate is bound at residue Arg490. 535–538 (GLDR) is an ATP binding site.

The protein belongs to the class-II aminoacyl-tRNA synthetase family. Type 1 subfamily. Homodimer.

It is found in the cytoplasm. The enzyme catalyses tRNA(Asp) + L-aspartate + ATP = L-aspartyl-tRNA(Asp) + AMP + diphosphate. Catalyzes the attachment of L-aspartate to tRNA(Asp) in a two-step reaction: L-aspartate is first activated by ATP to form Asp-AMP and then transferred to the acceptor end of tRNA(Asp). The sequence is that of Aspartate--tRNA ligase from Shewanella woodyi (strain ATCC 51908 / MS32).